A 360-amino-acid chain; its full sequence is ACT1-like protein (360 aa).

A disordered region spans residues lysine 339 to glutamine 360.

Interacts with the receptor complex composed of ilcr-1 and ilcr-2. Also interacts with pik-1. As to expression, expressed in neurons.

Functionally, may act as an adapter to facilitate downstream signaling for the receptor complex composed of ilcr-1 and ilcr-2, which is a signaling complex that modulates neuronal activity and animal behavior in response to sensory neuron input. This chain is ACT1-like protein, found in Caenorhabditis elegans.